Here is a 2108-residue protein sequence, read N- to C-terminus: General negative regulator of transcription subunit 1 (2108 aa).

Coiled-coil stretches lie at residues 795 to 813 (NVTL…KSLT) and 1021 to 1046 (MQQH…QQQQ). The disordered stretch occupies residues 1323-1352 (QQQQLQKSRLNQPSQSAQPPGVNVPNPQGG). The span at 1329–1339 (KSRLNQPSQSA) shows a compositional bias: polar residues. The segment covering 1340–1352 (QPPGVNVPNPQGG) has biased composition (low complexity). Residue threonine 2102 is modified to Phosphothreonine.

This sequence belongs to the CNOT1 family. As to quaternary structure, forms a NOT protein complex that comprises NOT1, NOT2, NOT3, NOT4 and NOT5. Subunit of the 1.0 MDa CCR4-NOT core complex that contains CCR4, CAF1, NOT1, NOT2, NOT3, NOT4, NOT5, CAF40 and CAF130. In the complex interacts with CCR4, POP2, NOT2, NOT4 and NOT5. The core complex probably is part of a less characterized 1.9 MDa CCR4-NOT complex.

It is found in the cytoplasm. Its subcellular location is the nucleus. Functionally, acts as a component of the CCR4-NOT core complex, which in the nucleus seems to be a general transcription factor, and in the cytoplasm the major mRNA deadenylase involved in mRNA turnover. The NOT protein subcomplex negatively regulates the basal and activated transcription of many genes. Preferentially affects TC-type TATA element-dependent transcription. Could directly or indirectly inhibit component(s) of the general transcription machinery. The polypeptide is General negative regulator of transcription subunit 1 (CDC39) (Saccharomyces cerevisiae (strain ATCC 204508 / S288c) (Baker's yeast)).